The primary structure comprises 129 residues: Small ribosomal subunit protein uS11 (129 aa).

This sequence belongs to the universal ribosomal protein uS11 family. In terms of assembly, part of the 30S ribosomal subunit. Interacts with proteins S7 and S18. Binds to IF-3.

In terms of biological role, located on the platform of the 30S subunit, it bridges several disparate RNA helices of the 16S rRNA. Forms part of the Shine-Dalgarno cleft in the 70S ribosome. This chain is Small ribosomal subunit protein uS11, found in Roseobacter denitrificans (strain ATCC 33942 / OCh 114) (Erythrobacter sp. (strain OCh 114)).